We begin with the raw amino-acid sequence, 219 residues long: Ribose-5-phosphate isomerase A (219 aa).

Substrate is bound by residues 28 to 31 (TGST), 81 to 84 (DGAD), and 94 to 97 (KGGG). Glutamate 103 functions as the Proton acceptor in the catalytic mechanism. Lysine 121 contributes to the substrate binding site.

It belongs to the ribose 5-phosphate isomerase family. As to quaternary structure, homodimer.

It catalyses the reaction aldehydo-D-ribose 5-phosphate = D-ribulose 5-phosphate. The protein operates within carbohydrate degradation; pentose phosphate pathway; D-ribose 5-phosphate from D-ribulose 5-phosphate (non-oxidative stage): step 1/1. In terms of biological role, catalyzes the reversible conversion of ribose-5-phosphate to ribulose 5-phosphate. In Methylibium petroleiphilum (strain ATCC BAA-1232 / LMG 22953 / PM1), this protein is Ribose-5-phosphate isomerase A.